Reading from the N-terminus, the 337-residue chain is C5a anaphylatoxin chemotactic receptor 2 (337 aa).

At 1–38 the chain is on the extracellular side; the sequence is MGNDSVSYEYGDYSDLSDRPVDCLDGACLAIDPLRVAP. N-linked (GlcNAc...) asparagine glycosylation occurs at Asn3. Residues 39–61 traverse the membrane as a helical segment; that stretch reads LPLYAAIFLVGVPGNAMVAWVAG. The Cytoplasmic portion of the chain corresponds to 62-72; the sequence is KVARRRVGATW. A helical transmembrane segment spans residues 73–95; the sequence is LLHLAVADLLCCLSLPILAVPIA. Over 96-114 the chain is Extracellular; the sequence is RGGHWPYGAVGCRALPSII. Cys107 and Cys186 are oxidised to a cystine. The chain crosses the membrane as a helical span at residues 115–137; sequence LLTMYASVLLLAALSADLCFLAL. Residues 138–149 are Cytoplasmic-facing; that stretch reads GPAWWSTVQRAC. Residues 150 to 172 form a helical membrane-spanning segment; it reads GVQVACGAAWTLALLLTVPSAIY. Residues 173-202 lie on the Extracellular side of the membrane; that stretch reads RRLHQEHFPARLQCVVDYGGSSSTENAVTA. A helical membrane pass occupies residues 203–225; the sequence is IRFLFGFLGPLVAVASCHSALLC. Residues 226–237 are Cytoplasmic-facing; the sequence is WAARRCRPLGTA. The helical transmembrane segment at 238–260 threads the bilayer; it reads IVVGFFVCWAPYHLLGLVLTVAA. The Extracellular portion of the chain corresponds to 261 to 274; the sequence is PNSALLARALRAEP. Residues 275–294 traverse the membrane as a helical segment; sequence LIVGLALAHSCLNPMLFLYF. Residues 295-337 lie on the Cytoplasmic side of the membrane; it reads GRAQLRRSLPAACHWALRESQGQDESVDSKKSTSHDLVSEMEV. Position 320 is a phosphoserine (Ser320).

This sequence belongs to the G-protein coupled receptor 1 family. In terms of assembly, interacts with C3 (the anaphylatoxin peptide C3a and the adipogenic hormone ASP); the interaction occurs with higher affinity for ASP, enhancing the phosphorylation and activation of GPR77, recruitment of ARRB2 to the cell surface and endocytosis of GRP77. As to expression, frontal cortex, hippocampus, hypothalamus, pons and liver.

The protein resides in the cell membrane. Receptor for the chemotactic and inflammatory C3a, C4a and C5a anaphylatoxin peptides and also for their dearginated forms ASP/C3adesArg, C4adesArg and C5adesArg respectively. Couples weakly to G(i)-mediated signaling pathways. In Homo sapiens (Human), this protein is C5a anaphylatoxin chemotactic receptor 2 (C5AR2).